The chain runs to 413 residues: Tyrosine--tRNA ligase (413 aa).

Position 34 (tyrosine 34) interacts with L-tyrosine. Positions 39–48 (PTSHSLTVGH) match the 'HIGH' region motif. Residues tyrosine 164 and glutamine 168 each coordinate L-tyrosine. Residues 225-229 (KFGKS) carry the 'KMSKS' region motif. Lysine 228 is an ATP binding site. The region spanning 347–413 (ILLVDALVQT…GKKNNALIVF (67 aa)) is the S4 RNA-binding domain.

This sequence belongs to the class-I aminoacyl-tRNA synthetase family. TyrS type 1 subfamily. In terms of assembly, homodimer.

It localises to the cytoplasm. It carries out the reaction tRNA(Tyr) + L-tyrosine + ATP = L-tyrosyl-tRNA(Tyr) + AMP + diphosphate + H(+). Catalyzes the attachment of tyrosine to tRNA(Tyr) in a two-step reaction: tyrosine is first activated by ATP to form Tyr-AMP and then transferred to the acceptor end of tRNA(Tyr). The sequence is that of Tyrosine--tRNA ligase from Onion yellows phytoplasma (strain OY-M).